Consider the following 355-residue polypeptide: MTVSTDNTSPVISRASSPTFGDHGKDFDNNKIIPISIEAPTSSAAAVGAKTAIEPEGRSPLLQRICYLVKIIAAIALFVVGIAALVCLYLGSVISTPSLILMLAIMLVSFVIVITAIRDGTPSQVVRHMKQQIQQFGEENTRLHTAVENLKAVNVELSEQINQLKQLHTRLSDFGDRLEANTGDFTALIADFQLSLEEFKSVGTKVETMLSPFEKLAQSLKETFSQEAVQAMMSSVTELRTNLNALKELITENKTVIEQLKADAQLREEQVRFLEKRKQELEEACSTLSHSIATLQESTTLLKDSTTNLHAVESRLIGVMVQDGAESSTVEEASQDDSAQPQDENQSDAGEHKDS.

The segment covering 1-19 (MTVSTDNTSPVISRASSPT) has biased composition (polar residues). The interval 1–25 (MTVSTDNTSPVISRASSPTFGDHGK) is disordered. A required for membrane anchoring region spans residues 54 to 118 (EPEGRSPLLQ…SFVIVITAIR (65 aa)). A run of 2 helical transmembrane segments spans residues 67-91 (YLVK…LYLG) and 97-117 (PSLI…ITAI). Positions 243 to 298 (LNALKELITENKTVIEQLKADAQLREEQVRFLEKRKQELEEACSTLSHSIATLQES) form a coiled coil. The segment at 320–355 (MVQDGAESSTVEEASQDDSAQPQDENQSDAGEHKDS) is disordered. The span at 325–348 (AESSTVEEASQDDSAQPQDENQSD) shows a compositional bias: polar residues.

This sequence belongs to the IncA family. Forms homodimers, and probably higher-order oligomers too.

The protein localises to the secreted. It localises to the host vacuole. Its subcellular location is the host pathogen-containing vacuole. It is found in the host pathogen-containing vacuole membrane. In terms of biological role, chlamydia replicate within a host intracellular vacuole, termed an inclusion, which is formed by fusion of many smaller inclusion bodies. IncA is probably involved in the homotypic fusion of inclusions. This chain is Inclusion membrane protein A (incA), found in Chlamydia caviae (strain ATCC VR-813 / DSM 19441 / 03DC25 / GPIC) (Chlamydophila caviae).